Consider the following 316-residue polypeptide: GPI-specific phospholipase A2-like PGAP3 (316 aa).

Residues 1–18 form the signal peptide; the sequence is MAPFLVLFLAGVVAASRG. Over 19–93 the chain is Lumenal; that stretch reads DREPVYRDCV…QFHGKWPFSR (75 aa). The N-linked (GlcNAc...) asparagine glycan is linked to Asn35. A helical membrane pass occupies residues 94–114; sequence FLFFQEPASALASFLNGVASL. At 115 to 132 the chain is on the cytoplasmic side; sequence LMLLRYRSSVPSSCQMYR. A helical transmembrane segment spans residues 133 to 153; sequence TCLAFSMVSVNAWFWSTIFHT. Over 154-163 the chain is Lumenal; sequence RDTALTEKMD. Residues 164-180 form a helical membrane-spanning segment; that stretch reads YFCASSVILHSIYLCCM. Residues 181-182 lie on the Cytoplasmic side of the membrane; sequence RT. A helical transmembrane segment spans residues 183–203; that stretch reads FGLQYPSIANGFGAFLVLLFA. Residues 204–218 are Lumenal-facing; that stretch reads CHVSYLTLGRFDYSY. A helical transmembrane segment spans residues 219 to 239; sequence NMAANTGFGVLNLMWWLAWCF. Residues 240–251 lie on the Cytoplasmic side of the membrane; the sequence is RRRFHQPYLWKC. A helical transmembrane segment spans residues 252-272; it reads VLVVISLQSLALLELLDFPPV. A topological domain (lumenal) is located at residue Met273. Residues 274 to 293 form a helical membrane-spanning segment; the sequence is WILDAHALWHFSTVPLHFLF. Residues 294–316 are Cytoplasmic-facing; sequence YSFLKDDSLYLLKINHDDIPKLD.

This sequence belongs to the PGAP3 family.

It is found in the golgi apparatus membrane. Functionally, involved in the fatty acid remodeling steps of GPI-anchor maturation where the unsaturated acyl chain at sn-2 of inositol phosphate is replaced by a saturated stearoyl chain. May catalyze the first step of the fatty acid remodeling, by removing the unsaturated acyl chain at sn-2 of inositol phosphate, generating a lyso-GPI intermediate. The fatty acid remodeling steps is critical for the integration of GPI-APs into lipid rafts. The sequence is that of GPI-specific phospholipase A2-like PGAP3 from Xenopus tropicalis (Western clawed frog).